Reading from the N-terminus, the 228-residue chain is Trichome differentiation protein GL1 (228 aa).

2 HTH myb-type domains span residues 11–63 and 64–118; these read NQEY…MNYL and SPNV…SKKL. 2 DNA-binding regions (H-T-H motif) span residues 39–63 and 91–114; these read WNRIVRKTGLKRCGKSCRLRWMNYL and WSLIAKRVPGRTDNQVKNYWNTHL.

In terms of assembly, homodimer and heterodimer with MYB82. Interacts directly with GL3 and BHLH2. Part of a complex made of GL1, GL3 or BHLH2, and TTG1. Also interacts with BHLH2/EGL3/MYC146 and BHLH12/MYC1. Interacts with MYB82. As to expression, expressed in leaves, stems and flowers. Expressed in trichome cells and in leaf primordia.

The protein resides in the nucleus. Transcription activator, when associated with BHLH2/EGL3/MYC146 or BHLH12/MYC1. Involved in epidermal cell fate specification in leaves. Together with TTG1 and GL3, promotes trichome formation and endoreplication. Regulates the production of a signal that induces hair (trichome) precursor cells on leaf primordia to differentiate. Binds to the WER-binding sites (WBS) promoter regions and activates the transcription of target genes. The polypeptide is Trichome differentiation protein GL1 (Arabidopsis thaliana (Mouse-ear cress)).